The chain runs to 117 residues: uncharacterized protein (117 aa).

A signal peptide spans 1 to 23 (MVSEAEFMAALAKFAETSATASA).

This is an uncharacterized protein from Archaeoglobus fulgidus (strain ATCC 49558 / DSM 4304 / JCM 9628 / NBRC 100126 / VC-16).